The sequence spans 697 residues: Pentatricopeptide repeat-containing protein 1, mitochondrial (697 aa).

The N-terminal 36 residues, 1–36 (MLKRAHYVALHVTLNHNGLSYQRVFSCLTQFPMLRH), are a transit peptide targeting the mitochondrion. PPR repeat units lie at residues 257–288 (RPFT…VKNK) and 294–328 (SDVF…NVNF).

Its subcellular location is the mitochondrion. In terms of biological role, mitochondrial RNA-binding protein required for the stability of the cox2 and cox3 mRNAs. The chain is Pentatricopeptide repeat-containing protein 1, mitochondrial (ppr1) from Schizosaccharomyces pombe (strain 972 / ATCC 24843) (Fission yeast).